Reading from the N-terminus, the 180-residue chain is Stathmin-3 (180 aa).

S-palmitoyl cysteine attachment occurs at residues Cys-22 and Cys-24. An SLD domain is found at 38 to 180 (GDMEVKQLDK…NKEQREEMSG (143 aa)). 7 positions are modified to phosphoserine: Ser-50, Ser-60, Ser-65, Ser-68, Ser-72, Ser-73, and Ser-81. Residues 58 to 81 (LKSPSDLSPESPVLSSPPKRKDAS) form a disordered region. Low complexity predominate over residues 60–74 (SPSDLSPESPVLSSP). Positions 75-179 (PKRKDASLEE…RNKEQREEMS (105 aa)) form a coiled coil.

It belongs to the stathmin family. In terms of assembly, interacts with STAT3. Interacts with CLU (secreted form); this interaction may act as an important modulator during neuronal differentiation. Post-translationally, N-terminal palmitoylation promotes specific anchoring to the cytosolic leaflet of Golgi membranes and subsequent vesicular trafficking along dendrites and axons. Neuronal Stathmins are substrates for palmitoyltransferases ZDHHC3, ZDHHC7 and ZDHHC15. As to expression, neuron specific.

Its subcellular location is the golgi apparatus. It localises to the cell projection. The protein localises to the growth cone. The protein resides in the axon. It is found in the cytoplasm. Its subcellular location is the cytosol. Exhibits microtubule-destabilizing activity, which is antagonized by STAT3. This Rattus norvegicus (Rat) protein is Stathmin-3 (Stmn3).